Reading from the N-terminus, the 320-residue chain is Geranylgeranyl pyrophosphate synthase (320 aa).

The isopentenyl diphosphate site is built by lysine 35, arginine 38, and histidine 67. Residues aspartate 74 and aspartate 78 each contribute to the Mg(2+) site. Arginine 83 provides a ligand contact to dimethylallyl diphosphate. Arginine 84 serves as a coordination point for isopentenyl diphosphate. 5 residues coordinate dimethylallyl diphosphate: lysine 168, threonine 169, glutamine 206, lysine 223, and lysine 233.

It belongs to the FPP/GGPP synthase family. Mg(2+) serves as cofactor.

It localises to the cytoplasm. It carries out the reaction isopentenyl diphosphate + dimethylallyl diphosphate = (2E)-geranyl diphosphate + diphosphate. The enzyme catalyses isopentenyl diphosphate + (2E)-geranyl diphosphate = (2E,6E)-farnesyl diphosphate + diphosphate. It catalyses the reaction isopentenyl diphosphate + (2E,6E)-farnesyl diphosphate = (2E,6E,10E)-geranylgeranyl diphosphate + diphosphate. It participates in isoprenoid biosynthesis; farnesyl diphosphate biosynthesis; farnesyl diphosphate from geranyl diphosphate and isopentenyl diphosphate: step 1/1. The protein operates within isoprenoid biosynthesis; geranyl diphosphate biosynthesis; geranyl diphosphate from dimethylallyl diphosphate and isopentenyl diphosphate: step 1/1. It functions in the pathway isoprenoid biosynthesis; geranylgeranyl diphosphate biosynthesis; geranylgeranyl diphosphate from farnesyl diphosphate and isopentenyl diphosphate: step 1/1. Its function is as follows. Catalyzes the trans-addition of the 3 molecules of IPP onto DMAPP to form geranylgeranyl pyrophosphate. May be involved in vesicle trafficking and protein sorting. This is Geranylgeranyl pyrophosphate synthase (BTS1) from Eremothecium gossypii (strain ATCC 10895 / CBS 109.51 / FGSC 9923 / NRRL Y-1056) (Yeast).